We begin with the raw amino-acid sequence, 459 residues long: Cysteine--tRNA ligase (459 aa).

Cys-29 lines the Zn(2+) pocket. Positions 31-41 (VTTYDYCHIGH) match the 'HIGH' region motif. Residues Cys-210, His-235, and Glu-239 each contribute to the Zn(2+) site. Positions 267–271 (KMSKS) match the 'KMSKS' region motif. Residue Lys-270 coordinates ATP.

The protein belongs to the class-I aminoacyl-tRNA synthetase family. As to quaternary structure, monomer. The cofactor is Zn(2+).

The protein resides in the cytoplasm. The enzyme catalyses tRNA(Cys) + L-cysteine + ATP = L-cysteinyl-tRNA(Cys) + AMP + diphosphate. The chain is Cysteine--tRNA ligase from Idiomarina loihiensis (strain ATCC BAA-735 / DSM 15497 / L2-TR).